The sequence spans 262 residues: Alpha/beta-gliadin A-I (262 aa).

Positions 1–20 are cleaved as a signal peptide; it reads MKTFLILALLAIVATTATTA. 3 disordered regions span residues 51–73, 87–120, and 225–251; these read LGQQQPFPPQQPYPQPQPFPSQQ, PYSQPQPFRPQQPYPQPQPQYSQPQQPISQQQQQ, and YPLGQGSFRPSQQNPQAQGSVQPQQLP. Pro residues-rich tracts occupy residues 56–71 and 93–104; these read PFPPQQPYPQPQPFPS and PFRPQQPYPQPQ. The span at 105–120 shows a compositional bias: low complexity; that stretch reads PQYSQPQQPISQQQQQ. Residues 232 to 251 show a composition bias toward polar residues; that stretch reads FRPSQQNPQAQGSVQPQQLP.

This sequence belongs to the gliadin/glutenin family. In terms of processing, substrate of transglutaminase.

Functionally, gliadin is the major seed storage protein in wheat. The polypeptide is Alpha/beta-gliadin A-I (Triticum aestivum (Wheat)).